The sequence spans 260 residues: Tropinone reductase 2 (260 aa).

13-37 (LVTGGSRGIGYGIVEELANLGASVY) serves as a coordination point for NADP(+). Serine 146 contacts substrate. The Proton acceptor role is filled by tyrosine 159.

This sequence belongs to the short-chain dehydrogenases/reductases (SDR) family.

It catalyses the reaction pseudotropine + NADP(+) = tropinone + NADPH + H(+). Its pathway is alkaloid biosynthesis; tropane alkaloid biosynthesis. Its function is as follows. Catalyzes the stereospecific reduction of tropinone to pseudotropine. The sequence is that of Tropinone reductase 2 (TR2) from Hyoscyamus niger (Black henbane).